The sequence spans 334 residues: Holliday junction branch migration complex subunit RuvB (334 aa).

The segment at 1–182 is large ATPase domain (RuvB-L); that stretch reads MDDRMIDGEL…FGVLSRLEYY (182 aa). ATP is bound by residues L21, R22, G63, K66, T67, T68, 129–131, R172, Y182, and R219; that span reads EDF. Mg(2+) is bound at residue T67. The small ATPAse domain (RuvB-S) stretch occupies residues 183 to 253; the sequence is EIKDLCNIVE…STKQALEMLQ (71 aa). Residues 256 to 334 are head domain (RuvB-H); that stretch reads DAGLDHVDHK…HLGIKRTGED (79 aa). DNA contacts are provided by R311 and R316.

Belongs to the RuvB family. As to quaternary structure, homohexamer. Forms an RuvA(8)-RuvB(12)-Holliday junction (HJ) complex. HJ DNA is sandwiched between 2 RuvA tetramers; dsDNA enters through RuvA and exits via RuvB. An RuvB hexamer assembles on each DNA strand where it exits the tetramer. Each RuvB hexamer is contacted by two RuvA subunits (via domain III) on 2 adjacent RuvB subunits; this complex drives branch migration. In the full resolvosome a probable DNA-RuvA(4)-RuvB(12)-RuvC(2) complex forms which resolves the HJ.

Its subcellular location is the cytoplasm. It carries out the reaction ATP + H2O = ADP + phosphate + H(+). In terms of biological role, the RuvA-RuvB-RuvC complex processes Holliday junction (HJ) DNA during genetic recombination and DNA repair, while the RuvA-RuvB complex plays an important role in the rescue of blocked DNA replication forks via replication fork reversal (RFR). RuvA specifically binds to HJ cruciform DNA, conferring on it an open structure. The RuvB hexamer acts as an ATP-dependent pump, pulling dsDNA into and through the RuvAB complex. RuvB forms 2 homohexamers on either side of HJ DNA bound by 1 or 2 RuvA tetramers; 4 subunits per hexamer contact DNA at a time. Coordinated motions by a converter formed by DNA-disengaged RuvB subunits stimulates ATP hydrolysis and nucleotide exchange. Immobilization of the converter enables RuvB to convert the ATP-contained energy into a lever motion, pulling 2 nucleotides of DNA out of the RuvA tetramer per ATP hydrolyzed, thus driving DNA branch migration. The RuvB motors rotate together with the DNA substrate, which together with the progressing nucleotide cycle form the mechanistic basis for DNA recombination by continuous HJ branch migration. Branch migration allows RuvC to scan DNA until it finds its consensus sequence, where it cleaves and resolves cruciform DNA. This chain is Holliday junction branch migration complex subunit RuvB, found in Oceanobacillus iheyensis (strain DSM 14371 / CIP 107618 / JCM 11309 / KCTC 3954 / HTE831).